Consider the following 249-residue polypeptide: 3-deoxy-manno-octulosonate cytidylyltransferase (249 aa).

This sequence belongs to the KdsB family.

The protein resides in the cytoplasm. It carries out the reaction 3-deoxy-alpha-D-manno-oct-2-ulosonate + CTP = CMP-3-deoxy-beta-D-manno-octulosonate + diphosphate. It functions in the pathway nucleotide-sugar biosynthesis; CMP-3-deoxy-D-manno-octulosonate biosynthesis; CMP-3-deoxy-D-manno-octulosonate from 3-deoxy-D-manno-octulosonate and CTP: step 1/1. Its pathway is bacterial outer membrane biogenesis; lipopolysaccharide biosynthesis. Activates KDO (a required 8-carbon sugar) for incorporation into bacterial lipopolysaccharide in Gram-negative bacteria. This Brucella anthropi (strain ATCC 49188 / DSM 6882 / CCUG 24695 / JCM 21032 / LMG 3331 / NBRC 15819 / NCTC 12168 / Alc 37) (Ochrobactrum anthropi) protein is 3-deoxy-manno-octulosonate cytidylyltransferase.